The chain runs to 249 residues: 2,3-bisphosphoglycerate-dependent phosphoglycerate mutase (249 aa).

Residues 9–16, 22–23, R61, 88–91, K99, 115–116, and 184–185 each bind substrate; these read RHGQSQWN, TG, ERHY, RR, and GN. H10 serves as the catalytic Tele-phosphohistidine intermediate. Residue E88 is the Proton donor/acceptor of the active site.

Belongs to the phosphoglycerate mutase family. BPG-dependent PGAM subfamily. As to quaternary structure, homodimer.

The catalysed reaction is (2R)-2-phosphoglycerate = (2R)-3-phosphoglycerate. The protein operates within carbohydrate degradation; glycolysis; pyruvate from D-glyceraldehyde 3-phosphate: step 3/5. Its function is as follows. Catalyzes the interconversion of 2-phosphoglycerate and 3-phosphoglycerate. The chain is 2,3-bisphosphoglycerate-dependent phosphoglycerate mutase from Xanthomonas oryzae pv. oryzae (strain PXO99A).